A 490-amino-acid polypeptide reads, in one-letter code: Histone-lysine N-methyltransferase Smyd1 (490 aa).

Residues 7 to 253 form the SET domain; that stretch reads ENVEVFTSEG…EGEELTVSYI (247 aa). 17–19 provides a ligand contact to S-adenosyl-L-methionine; sequence KGR. Zn(2+) is bound by residues Cys52, Cys55, Cys65, Cys68, Cys74, Cys78, His86, and Cys90. An MYND-type zinc finger spans residues 52 to 90; that stretch reads CHTCFKRQEKLHRCGQCKFAHYCDRTCQKDAWLNHKNEC. S-adenosyl-L-methionine is bound by residues His135 and 205–206; that span reads NH. Residue Cys208 coordinates Zn(2+). Residue 270-272 participates in S-adenosyl-L-methionine binding; sequence YYF. Zn(2+) is bound by residues Cys274, Cys276, and Cys279.

This sequence belongs to the class V-like SAM-binding methyltransferase superfamily. Interacts with HDAC1, HDAC2 and HDAC3. Interacts (via MYND-type zinc finger) with NACA isoform skNAC. In terms of tissue distribution, expressed in cardiac and skeletal muscle, lymphocytes and thymus.

The protein localises to the cytoplasm. It is found in the nucleus. The enzyme catalyses L-lysyl(4)-[histone H3] + 3 S-adenosyl-L-methionine = N(6),N(6),N(6)-trimethyl-L-lysyl(4)-[histone H3] + 3 S-adenosyl-L-homocysteine + 3 H(+). Functionally, methylates histone H3 at 'Lys-4' (H3K4me). Acts as a transcriptional repressor. Essential for cardiomyocyte differentiation and cardiac morphogenesis. This Mus musculus (Mouse) protein is Histone-lysine N-methyltransferase Smyd1 (Smyd1).